The sequence spans 540 residues: 2-isopropylmalate synthase (540 aa).

In terms of domain architecture, Pyruvate carboxyltransferase spans 8–271 (VLIFDTTLRD…NPFFGRESDS (264 aa)). Residues D17, H208, H210, and N244 each coordinate Mn(2+). Residues 408-540 (QLRLVQVSCG…AVLADRRPGI (133 aa)) are regulatory domain.

The protein belongs to the alpha-IPM synthase/homocitrate synthase family. LeuA type 1 subfamily. In terms of assembly, homodimer. Mn(2+) is required as a cofactor.

The protein resides in the cytoplasm. It carries out the reaction 3-methyl-2-oxobutanoate + acetyl-CoA + H2O = (2S)-2-isopropylmalate + CoA + H(+). Its pathway is amino-acid biosynthesis; L-leucine biosynthesis; L-leucine from 3-methyl-2-oxobutanoate: step 1/4. Functionally, catalyzes the condensation of the acetyl group of acetyl-CoA with 3-methyl-2-oxobutanoate (2-ketoisovalerate) to form 3-carboxy-3-hydroxy-4-methylpentanoate (2-isopropylmalate). The chain is 2-isopropylmalate synthase from Prochlorococcus marinus (strain MIT 9303).